The sequence spans 189 residues: Elongation factor P 2 (189 aa).

Belongs to the elongation factor P family.

Its subcellular location is the cytoplasm. The protein operates within protein biosynthesis; polypeptide chain elongation. Involved in peptide bond synthesis. Stimulates efficient translation and peptide-bond synthesis on native or reconstituted 70S ribosomes in vitro. Probably functions indirectly by altering the affinity of the ribosome for aminoacyl-tRNA, thus increasing their reactivity as acceptors for peptidyl transferase. This chain is Elongation factor P 2, found in Lactobacillus acidophilus (strain ATCC 700396 / NCK56 / N2 / NCFM).